The sequence spans 1310 residues: Zinc finger protein 521 (1310 aa).

Residues M1–R10 show a composition bias toward basic residues. Residues M1 to A46 are disordered. The segment covering S11–D21 has biased composition (basic and acidic residues). A C2H2-type 1; degenerate zinc finger spans residues H48–I68. The disordered stretch occupies residues D82–F106. Polar residues predominate over residues W87–Q97. 7 C2H2-type zinc fingers span residues Y119 to H141, F147 to H169, Y175 to H197, Y203 to H225, Q247 to H270, L282 to H305, and N311 to H333. The segment at Y404–H428 adopts a C2H2-type 9; degenerate zinc-finger fold. C2H2-type zinc fingers lie at residues H436–H459, Y476–H499, and F512–H535. A C2H2-type 13; atypical zinc finger spans residues Y559 to H584. 7 C2H2-type zinc fingers span residues Y633 to H655, L663 to H685, Y693 to H716, F721 to H744, Y751 to H774, H782 to H804, and Y808 to H831. A C2H2-type 21; degenerate zinc finger spans residues Y885–D907. 3 consecutive C2H2-type zinc fingers follow at residues Y929–H951, Y958–H980, and F1019–H1041. Residues Y1064–L1082 form a C2H2-type 25; degenerate zinc finger. 5 C2H2-type zinc fingers span residues T1138–H1161, Y1194–H1216, H1224–H1246, F1255–H1278, and Y1285–H1308.

Belongs to the krueppel C2H2-type zinc-finger protein family.

The protein localises to the nucleus. Functionally, transcription factor that can both act as an activator or a repressor depending on the context. Involved in BMP signaling and in the regulation of the immature compartment of the hematopoietic system. The protein is Zinc finger protein 521 (znf521) of Xenopus laevis (African clawed frog).